The chain runs to 297 residues: Light-independent protochlorophyllide reductase iron-sulfur ATP-binding protein (297 aa).

ATP-binding positions include 41–46 and lysine 70; that span reads GIGKST. Serine 45 contributes to the Mg(2+) binding site. Positions 126 and 160 each coordinate [4Fe-4S] cluster. Residues 211-212 and 235-237 each bind ATP; these read NR and PDL.

The protein belongs to the NifH/BchL/ChlL family. Homodimer. Protochlorophyllide reductase is composed of three subunits; BchL, BchN and BchB. It depends on [4Fe-4S] cluster as a cofactor.

The enzyme catalyses chlorophyllide a + oxidized 2[4Fe-4S]-[ferredoxin] + 2 ADP + 2 phosphate = protochlorophyllide a + reduced 2[4Fe-4S]-[ferredoxin] + 2 ATP + 2 H2O. It participates in porphyrin-containing compound metabolism; bacteriochlorophyll biosynthesis (light-independent). Component of the dark-operative protochlorophyllide reductase (DPOR) that uses Mg-ATP and reduced ferredoxin to reduce ring D of protochlorophyllide (Pchlide) to form chlorophyllide a (Chlide). This reaction is light-independent. The L component serves as a unique electron donor to the NB-component of the complex, and binds Mg-ATP. The chain is Light-independent protochlorophyllide reductase iron-sulfur ATP-binding protein from Cereibacter sphaeroides (strain KD131 / KCTC 12085) (Rhodobacter sphaeroides).